The following is a 261-amino-acid chain: Sepiapterin reductase (261 aa).

Methionine 1 bears the N-acetylmethionine mark. Glycine 14–glycine 20 contacts NADP(+). Serine 32 carries the post-translational modification Phosphoserine. NADP(+)-binding positions include arginine 42–asparagine 43 and aspartate 69–leucine 70. Serine 103 carries the phosphoserine modification. Substrate contacts are provided by residues serine 157 to leucine 158 and tyrosine 170. Lysine 174 contributes to the NADP(+) binding site. Substrate is bound at residue glycine 199. Leucine 201–glutamine 206 serves as a coordination point for NADP(+). A Phosphoserine; by CaMK2; in vitro modification is found at serine 213. Aspartate 257 lines the substrate pocket.

It belongs to the sepiapterin reductase family. As to quaternary structure, homodimer. Post-translationally, in vitro phosphorylation of Ser-213 by CaMK2 does not change kinetic parameters.

It localises to the cytoplasm. It carries out the reaction L-erythro-7,8-dihydrobiopterin + NADP(+) = L-sepiapterin + NADPH + H(+). The enzyme catalyses (6R)-L-erythro-5,6,7,8-tetrahydrobiopterin + 2 NADP(+) = 6-pyruvoyl-5,6,7,8-tetrahydropterin + 2 NADPH + 2 H(+). Its function is as follows. Catalyzes the final one or two reductions in tetra-hydrobiopterin biosynthesis to form 5,6,7,8-tetrahydrobiopterin. This Homo sapiens (Human) protein is Sepiapterin reductase (SPR).